We begin with the raw amino-acid sequence, 453 residues long: Tubulin alpha-1/2/3 chain (453 aa).

Gln11 provides a ligand contact to GTP. Residue Lys40 is modified to N6-acetyllysine. The GTP site is built by Glu71, Ser140, Gly144, Thr145, Thr179, Asn206, and Asn228. Glu71 contacts Mg(2+). Glu254 is an active-site residue. A disordered region spans residues 429–453; the sequence is EKDYEEVGTESQEGDGEEGEDGGDQ. The span at 431-453 shows a compositional bias: acidic residues; sequence DYEEVGTESQEGDGEEGEDGGDQ.

Belongs to the tubulin family. Dimer of alpha and beta chains. A typical microtubule is a hollow water-filled tube with an outer diameter of 25 nm and an inner diameter of 15 nM. Alpha-beta heterodimers associate head-to-tail to form protofilaments running lengthwise along the microtubule wall with the beta-tubulin subunit facing the microtubule plus end conferring a structural polarity. Microtubules usually have 13 protofilaments but different protofilament numbers can be found in some organisms and specialized cells. Mg(2+) is required as a cofactor. Post-translationally, acetylation of alpha chains at Lys-40 stabilizes microtubules and affects affinity and processivity of microtubule motors. This modification has a role in multiple cellular functions, ranging from cell motility, cell cycle progression or cell differentiation to intracellular trafficking and signaling.

Its subcellular location is the cytoplasm. It localises to the cytoskeleton. It carries out the reaction GTP + H2O = GDP + phosphate + H(+). Its function is as follows. Tubulin is the major constituent of microtubules, a cylinder consisting of laterally associated linear protofilaments composed of alpha- and beta-tubulin heterodimers. Microtubules grow by the addition of GTP-tubulin dimers to the microtubule end, where a stabilizing cap forms. Below the cap, tubulin dimers are in GDP-bound state, owing to GTPase activity of alpha-tubulin. This chain is Tubulin alpha-1/2/3 chain (TBA1), found in Naegleria gruberi (Amoeba).